A 1024-amino-acid chain; its full sequence is MIYIVNPILVKNNYIISNLYLLLIQEIIYNLRYYILFLNNNINVKFNFIYYKIIILLTNININSIDTIQNINNLLKIILTLKLNFININKIIKFNILIFILPFIYNNIIILNGLYKTCIQLFKKNNKIFIIKFKNNNKNIIYVYIYISLGLRIIFKISKLNIDCYFNNFKFNFLILLLYLNNIYINKNISLFIYNNIINKKILIYNYIKFIYSKYNNINNIISLKLFIIKLNKFNNIYINLLNILFSIKLNFSYYSDFYINNIYNKKFYSIIDNLLIKSKKYLKIFKYQLLNINRNIYNNITLLLNNKKYINIILENININPLVQYSDQVNNLSEINQKFKINMITTGLNSKFILNNDLRELPRNILGYISLINTNEGLTCGLVNYLTTNIFLNLKYLFVIYYKHIFYNRYNFKLLLNIFNKNFYNISFNNIYLKKNINFNKTTILTINKNTFKICNITQNIIYIPFNYLLSFIENLIPFIHYNDSIRNLMSIKMHTQIVPIIYPNLSNIITNYNFILNKYLNHLIISYQEGIVIYVSCIKIIIRDLFNRQIIYYLNNYKKINQNILLIYKPIVWVGEKVNIGQILAINSNLLNSEYSLGNNLLVGYGSYLGYEYEDAIIISRKILYNNLYTSLHLNIYEISLNIINNIPEICSINLSKMYYKNIKHLDKYGIIKEGTYILANNILISKLMFMPFIFNNKSLINIINFLFGSKLRIFKNKPIISTIHDIGRVIKIEILPNHLYNKTEKNNIYLKFRIYIGIQKYLQLGDKICNRHGHKGIISYISEINDIPYLNNKIQPDIFISAISIPSRINIGQIFEGIYGLNSLYLNTRYIISNNLNKNYYNNYNHIFNYYKYNYNNNFNINSKMSYNYNKYYLKNPFTGNMINNSICLNNIYYYKLIHMIKDKFRYRFIGLYSELTQQPIKGNTKQGGQRFGEMEVWALEAFGASYLFKEFFTYKSDDIKSRKILKNYLFNNYKIKNTFISETFKLILKELQSLAINIEAFCIFNDTNNLLENLPINIIY.

It belongs to the RNA polymerase beta chain family. In terms of assembly, in plastids the minimal PEP RNA polymerase catalytic core is composed of four subunits: alpha, beta, beta', and beta''. When a (nuclear-encoded) sigma factor is associated with the core the holoenzyme is formed, which can initiate transcription (Potential).

The protein resides in the plastid. It is found in the apicoplast. It carries out the reaction RNA(n) + a ribonucleoside 5'-triphosphate = RNA(n+1) + diphosphate. Its function is as follows. DNA-dependent RNA polymerase catalyzes the transcription of DNA into RNA using the four ribonucleoside triphosphates as substrates. In Plasmodium falciparum (isolate 3D7), this protein is DNA-directed RNA polymerase subunit beta (rpoB).